The following is a 128-amino-acid chain: Large ribosomal subunit protein bL20c (128 aa).

Belongs to the bacterial ribosomal protein bL20 family.

The protein localises to the plastid. Functionally, binds directly to 23S ribosomal RNA and is necessary for the in vitro assembly process of the 50S ribosomal subunit. It is not involved in the protein synthesizing functions of that subunit. This is Large ribosomal subunit protein bL20c (rpl20) from Epifagus virginiana (Beechdrops).